Reading from the N-terminus, the 488-residue chain is Glutamyl-tRNA(Gln) amidotransferase subunit A (488 aa).

Residues lysine 79 and serine 159 each act as charge relay system in the active site. Serine 183 (acyl-ester intermediate) is an active-site residue.

It belongs to the amidase family. GatA subfamily. In terms of assembly, heterotrimer of A, B and C subunits.

It carries out the reaction L-glutamyl-tRNA(Gln) + L-glutamine + ATP + H2O = L-glutaminyl-tRNA(Gln) + L-glutamate + ADP + phosphate + H(+). In terms of biological role, allows the formation of correctly charged Gln-tRNA(Gln) through the transamidation of misacylated Glu-tRNA(Gln) in organisms which lack glutaminyl-tRNA synthetase. The reaction takes place in the presence of glutamine and ATP through an activated gamma-phospho-Glu-tRNA(Gln). This Wolbachia pipientis subsp. Culex pipiens (strain wPip) protein is Glutamyl-tRNA(Gln) amidotransferase subunit A.